A 243-amino-acid polypeptide reads, in one-letter code: Thiocyanate hydrolase subunit gamma (243 aa).

Residues Cys-128, Cys-131, Ser-132, and Cys-133 each coordinate Co(3+). Cys-131 is modified (cysteine sulfinic acid (-SO2H)). The residue at position 133 (Cys-133) is a Cysteine sulfenic acid (-SOH).

Belongs to the nitrile hydratase subunit alpha family. In terms of assembly, heterododecamer consisting of 4 alpha, 4 beta, and 4 gamma subunits. Requires Co(3+) as cofactor.

The enzyme catalyses thiocyanate + H2O + 2 H(+) = carbonyl sulfide + NH4(+). It participates in organosulfur degradation; thiocyanate degradation. In terms of biological role, involved in the degradation of thiocyanate. In Thiobacillus thioparus, this protein is Thiocyanate hydrolase subunit gamma (scnC).